The following is a 284-amino-acid chain: Tetraspanin-10 (284 aa).

The Cytoplasmic portion of the chain corresponds to 1–11; the sequence is MGMGTSTFVIR. The helical transmembrane segment at 12–32 threads the bilayer; sequence WVNLLTMLLAVAVIIFGVWMS. Residues 33 to 43 lie on the Extracellular side of the membrane; sequence THNDGCRRSLT. The helical transmembrane segment at 44 to 64 threads the bilayer; that stretch reads FPVIALGGFIFLISIIGFLGA. Topologically, residues 65-75 are cytoplasmic; it reads CKRSVALLWIY. A helical membrane pass occupies residues 76 to 96; sequence LAVLLIVLIAILVFTVLAFIV. Topologically, residues 97-228 are extracellular; the sequence is TNNGSGHTNP…AGVAQYMKTE (132 aa). Residues Asn99, Asn128, and Asn183 are each glycosylated (N-linked (GlcNAc...) asparagine). The chain crosses the membrane as a helical span at residues 229-249; sequence WRLVAIFNVVLFVVLISSLLS. Residues 250–284 are Cytoplasmic-facing; it reads TRFDSEQSFGLLNGLVQISNITFKDCQTTTVPKQF.

The protein belongs to the tetraspanin (TM4SF) family.

The protein resides in the membrane. Functionally, may be involved in the regulation of cell differentiation. The polypeptide is Tetraspanin-10 (TET10) (Arabidopsis thaliana (Mouse-ear cress)).